The sequence spans 483 residues: Iron-sulfur cluster assembly SufBD family protein ycf24 (483 aa).

This sequence belongs to the iron-sulfur cluster assembly SufBD family.

The protein localises to the plastid. The protein resides in the chloroplast. The protein is Iron-sulfur cluster assembly SufBD family protein ycf24 (ycf24) of Guillardia theta (Cryptophyte).